Consider the following 330-residue polypeptide: Dimethyladenosine transferase 1, mitochondrial (330 aa).

A mitochondrion-targeting transit peptide spans 1–84; sequence MAQPSARVLQ…RSILRRHPQR (84 aa). S-adenosyl-L-methionine contacts are provided by residues 38–41, N39, L41, G67, E89, D118, and N140; that span reads QNFL.

This sequence belongs to the class I-like SAM-binding methyltransferase superfamily. rRNA adenine N(6)-methyltransferase family. KsgA subfamily.

The protein localises to the mitochondrion. In terms of biological role, probable S-adenosyl-L-methionine-dependent methyltransferase which specifically dimethylates mitochondrial 12S rRNA at the conserved stem loop. In contrast to mtTFB2, it does not have a critical role in either transcription or regulation of the copy number of mitochondrial DNA. The sequence is that of Dimethyladenosine transferase 1, mitochondrial (mtTFB1) from Drosophila melanogaster (Fruit fly).